The sequence spans 418 residues: Protein fuzzy homolog (418 aa).

The protein belongs to the fuzzy family. Interacts with rsg1. Interacts with intu and wdpcp; fuz, intu and wdpcp probably form the core CPLANE (ciliogenesis and planar polarity effectors) complex.

It localises to the cytoplasm. The protein localises to the cytoskeleton. Its subcellular location is the cilium basal body. Probable planar cell polarity effector involved in cilium biogenesis. Proposed to function as core component of the CPLANE (ciliogenesis and planar polarity effectors) complex involved in the recruitment of peripheral IFT-A proteins to basal bodies. May regulate protein and membrane transport to the cilium. May control the organization of the apical actin cytoskeleton, which is essential for the normal orientation of elongating ciliary microtubules. In Xenopus tropicalis (Western clawed frog), this protein is Protein fuzzy homolog (fuz).